Here is a 327-residue protein sequence, read N- to C-terminus: cAMP-dependent protein kinase regulatory subunit (327 aa).

Residues 1–47 (MTNNISHNQKATEKVEAQNNNNITRKRRGAISSEPLGDKPATPLPNI) are disordered. Positions 1–65 (MTNNISHNQK…RLEQALSNNI (65 aa)) are dimerization and phosphorylation. The Pseudophosphorylation motif signature appears at 27 to 31 (RRGAI). Ser-32 carries the phosphoserine modification. 3',5'-cyclic AMP is bound by residues 66-188 (MFSH…EKVS), Glu-136, Arg-145, 189-327 (ILRH…SQKS), Glu-262, and Arg-271.

This sequence belongs to the cAMP-dependent kinase regulatory chain family. In Dictyostelium the holoenzyme is a dimer composed of a regulatory (R) and a catalytic (C) subunit. In the presence of cAMP it dissociates into the active C subunit and an R monomer. In other eukaryotes the holoenzyme is a tetramer composed of 2 regulatory (R) and 2 catalytic (C) subunits. In the presence of cAMP it dissociates into active monomeric C subunits and an R dimer. The pseudophosphorylation site binds to the substrate-binding region of the catalytic chain but is not phosphorylated. The physiological significance of phosphorylations by other kinases is unclear.

The protein is cAMP-dependent protein kinase regulatory subunit (pkaR) of Dictyostelium discoideum (Social amoeba).